Reading from the N-terminus, the 503-residue chain is Carboxyl-terminal PDZ ligand of neuronal nitric oxide synthase protein (503 aa).

In terms of domain architecture, PID spans 26–191; sequence FQHGISFEAK…ESERNSDGSG (166 aa). Residues 170–212 are disordered; the sequence is HTQQNADGQEDGESERNSDGSGDPGRQLTGAERVSTAAAEETD. Phosphoserine occurs at positions 183, 187, 190, and 262. The stretch at 318 to 359 forms a coiled coil; the sequence is AAEAAARLEAQARVHQLLLQNKDMLQHISLLVKQVQELELKL. Residues S367, S370, S397, and S413 each carry the phosphoserine modification. The tract at residues 491–503 is interaction with NOS1; sequence QELGDSLDDEIAV. Positions 501 to 503 match the PDZ-binding motif; sequence IAV.

As to quaternary structure, interacts with the PDZ domain of NOS1 or the second PDZ domain of DLG4 through its C-terminus. Interacts with RASD1 and SYN1, SYN2 and SYN3 via its PID domain. Forms a ternary complex with NOS1 and SYN1. Forms a ternary complex with NOS1 and RASD1.

It is found in the cell projection. The protein localises to the filopodium. It localises to the podosome. In terms of biological role, adapter protein involved in neuronal nitric-oxide (NO) synthesis regulation via its association with nNOS/NOS1. The complex formed with NOS1 and synapsins is necessary for specific NO and synapsin functions at a presynaptic level. Mediates an indirect interaction between NOS1 and RASD1 leading to enhance the ability of NOS1 to activate RASD1. Competes with DLG4 for interaction with NOS1, possibly affecting NOS1 activity by regulating the interaction between NOS1 and DLG4. In kidney podocytes, plays a role in podosomes and filopodia formation through CDC42 activation. This chain is Carboxyl-terminal PDZ ligand of neuronal nitric oxide synthase protein, found in Mus musculus (Mouse).